Consider the following 78-residue polypeptide: Translation initiation factor IF-1, chloroplastic (78 aa).

Residues 1 to 72 enclose the S1-like domain; it reads MKKQKLIDME…TKGRITYRFH (72 aa).

It belongs to the IF-1 family. In terms of assembly, component of the 30S ribosomal translation pre-initiation complex which assembles on the 30S ribosome in the order IF-2 and IF-3, IF-1 and N-formylmethionyl-tRNA(fMet); mRNA recruitment can occur at any time during PIC assembly.

It localises to the plastid. Its subcellular location is the chloroplast. One of the essential components for the initiation of protein synthesis. Stabilizes the binding of IF-2 and IF-3 on the 30S subunit to which N-formylmethionyl-tRNA(fMet) subsequently binds. Helps modulate mRNA selection, yielding the 30S pre-initiation complex (PIC). Upon addition of the 50S ribosomal subunit IF-1, IF-2 and IF-3 are released leaving the mature 70S translation initiation complex. This chain is Translation initiation factor IF-1, chloroplastic, found in Huperzia lucidula (Shining clubmoss).